A 448-amino-acid chain; its full sequence is Ribosomal protein uS12 methylthiotransferase RimO (448 aa).

One can recognise an MTTase N-terminal domain in the interval 16–126 (PRISFVSLGC…VVAAVHEAVP (111 aa)). The [4Fe-4S] cluster site is built by Cys-25, Cys-61, Cys-90, Cys-157, Cys-161, and Cys-164. The Radical SAM core domain maps to 143-380 (LTPRHYAYLK…MEAQSHVSLR (238 aa)). One can recognise a TRAM domain in the interval 383-448 (RAKVGKRLSV…DAYDLHGIAV (66 aa)).

The protein belongs to the methylthiotransferase family. RimO subfamily. The cofactor is [4Fe-4S] cluster.

It localises to the cytoplasm. It carries out the reaction L-aspartate(89)-[ribosomal protein uS12]-hydrogen + (sulfur carrier)-SH + AH2 + 2 S-adenosyl-L-methionine = 3-methylsulfanyl-L-aspartate(89)-[ribosomal protein uS12]-hydrogen + (sulfur carrier)-H + 5'-deoxyadenosine + L-methionine + A + S-adenosyl-L-homocysteine + 2 H(+). Functionally, catalyzes the methylthiolation of an aspartic acid residue of ribosomal protein uS12. The polypeptide is Ribosomal protein uS12 methylthiotransferase RimO (Methylorubrum extorquens (strain PA1) (Methylobacterium extorquens)).